Consider the following 421-residue polypeptide: Outer capsid protein P8 (421 aa).

This sequence belongs to the phytoreovirus outer capsid protein P8 family. In terms of assembly, homotrimer. Homomultimer. Interacts with host peroxisomal glycolate oxidase (GOX). This interaction mediates its relocation to virus factories peripheral to host peroxisomes.

It is found in the virion. The protein localises to the host cytoplasm. Functionally, capsid protein which self-assembles to form the outer icosahedral capsid with a T=13 symmetry, about 70 nm in diameter and consisting of 780 molecules capsid proteins. The polypeptide is Outer capsid protein P8 (Alopecurus aequalis (Barnyard grass)).